A 91-amino-acid polypeptide reads, in one-letter code: Co-chaperonin GroES (91 aa).

Belongs to the GroES chaperonin family. Heptamer of 7 subunits arranged in a ring. Interacts with the chaperonin GroEL.

It localises to the cytoplasm. Functionally, together with the chaperonin GroEL, plays an essential role in assisting protein folding. The GroEL-GroES system forms a nano-cage that allows encapsulation of the non-native substrate proteins and provides a physical environment optimized to promote and accelerate protein folding. GroES binds to the apical surface of the GroEL ring, thereby capping the opening of the GroEL channel. This chain is Co-chaperonin GroES, found in Oenococcus oeni (strain ATCC BAA-331 / PSU-1).